The sequence spans 507 residues: Glycerol kinase (507 aa).

Threonine 14 provides a ligand contact to ADP. Positions 14, 15, and 16 each coordinate ATP. Residue threonine 14 coordinates sn-glycerol 3-phosphate. Arginine 18 contributes to the ADP binding site. The sn-glycerol 3-phosphate site is built by arginine 84, glutamate 85, tyrosine 137, and aspartate 247. Residues arginine 84, glutamate 85, tyrosine 137, aspartate 247, and glutamine 248 each contribute to the glycerol site. ADP contacts are provided by threonine 269 and glycine 312. ATP contacts are provided by threonine 269, glycine 312, glutamine 316, and glycine 413. The ADP site is built by glycine 413 and asparagine 417.

The protein belongs to the FGGY kinase family.

It catalyses the reaction glycerol + ATP = sn-glycerol 3-phosphate + ADP + H(+). It functions in the pathway polyol metabolism; glycerol degradation via glycerol kinase pathway; sn-glycerol 3-phosphate from glycerol: step 1/1. Inhibited by fructose 1,6-bisphosphate (FBP). Key enzyme in the regulation of glycerol uptake and metabolism. Catalyzes the phosphorylation of glycerol to yield sn-glycerol 3-phosphate. The protein is Glycerol kinase of Psychromonas ingrahamii (strain DSM 17664 / CCUG 51855 / 37).